The primary structure comprises 429 residues: Threonine synthase (429 aa).

N6-(pyridoxal phosphate)lysine is present on Lys-108.

Belongs to the threonine synthase family. Pyridoxal 5'-phosphate serves as cofactor.

The catalysed reaction is O-phospho-L-homoserine + H2O = L-threonine + phosphate. Its pathway is amino-acid biosynthesis; L-threonine biosynthesis; L-threonine from L-aspartate: step 5/5. Catalyzes the gamma-elimination of phosphate from L-phosphohomoserine and the beta-addition of water to produce L-threonine. The sequence is that of Threonine synthase (thrC) from Buchnera aphidicola subsp. Schizaphis graminum (strain Sg).